Here is a 75-residue protein sequence, read N- to C-terminus: Phytosulfokines 3 (75 aa).

Residues 1 to 22 (MSPKVIAICLVALLLPISISHG) form the signal peptide. Residues 23–66 (GRIGPIEPSKASSKVVERGNYDGRVEGCEEDDCLVERLLVAHLD) constitute a propeptide that is removed on maturation. Tyr67 and Tyr69 each carry sulfotyrosine. A propeptide spanning residues 72-75 (GKHN) is cleaved from the precursor.

Belongs to the phytosulfokine family. Sulfation is important for activity and for the binding to a putative membrane receptor. Post-translationally, PSK-alpha is produced by endopeptidase digestion. PSK-beta is produced from PSK-alpha by exopeptidase digestion.

The protein resides in the secreted. Its function is as follows. Promotes plant cell differentiation, organogenesis and somatic embryogenesis as well as cell proliferation. This chain is Phytosulfokines 3 (PSK3), found in Oryza sativa subsp. japonica (Rice).